Reading from the N-terminus, the 96-residue chain is Large ribosomal subunit protein uL23 (96 aa).

It belongs to the universal ribosomal protein uL23 family. As to quaternary structure, part of the 50S ribosomal subunit. Contacts protein L29, and trigger factor when it is bound to the ribosome.

Its function is as follows. One of the early assembly proteins it binds 23S rRNA. One of the proteins that surrounds the polypeptide exit tunnel on the outside of the ribosome. Forms the main docking site for trigger factor binding to the ribosome. The protein is Large ribosomal subunit protein uL23 of Caldanaerobacter subterraneus subsp. tengcongensis (strain DSM 15242 / JCM 11007 / NBRC 100824 / MB4) (Thermoanaerobacter tengcongensis).